Here is a 34-residue protein sequence, read N- to C-terminus: Putative protein YmiB (34 aa).

Residues 7–24 (TAAKRIVFFIYLFVIQFW) form a helical membrane-spanning segment.

The protein resides in the membrane. The sequence is that of Putative protein YmiB (ymiB) from Escherichia coli (strain K12).